We begin with the raw amino-acid sequence, 292 residues long: tRNA pseudouridine synthase B (292 aa).

The active-site Nucleophile is Asp-38.

The protein belongs to the pseudouridine synthase TruB family. Type 1 subfamily.

The catalysed reaction is uridine(55) in tRNA = pseudouridine(55) in tRNA. Its function is as follows. Responsible for synthesis of pseudouridine from uracil-55 in the psi GC loop of transfer RNAs. The polypeptide is tRNA pseudouridine synthase B (Streptococcus sanguinis (strain SK36)).